The chain runs to 469 residues: 3-isopropylmalate dehydratase large subunit (469 aa).

Positions 350, 410, and 413 each coordinate [4Fe-4S] cluster.

It belongs to the aconitase/IPM isomerase family. LeuC type 1 subfamily. Heterodimer of LeuC and LeuD. The cofactor is [4Fe-4S] cluster.

It catalyses the reaction (2R,3S)-3-isopropylmalate = (2S)-2-isopropylmalate. Its pathway is amino-acid biosynthesis; L-leucine biosynthesis; L-leucine from 3-methyl-2-oxobutanoate: step 2/4. Functionally, catalyzes the isomerization between 2-isopropylmalate and 3-isopropylmalate, via the formation of 2-isopropylmaleate. The polypeptide is 3-isopropylmalate dehydratase large subunit (Allorhizobium ampelinum (strain ATCC BAA-846 / DSM 112012 / S4) (Agrobacterium vitis (strain S4))).